A 209-amino-acid polypeptide reads, in one-letter code: Ribosomal RNA large subunit methyltransferase E (209 aa).

S-adenosyl-L-methionine contacts are provided by glycine 63, tryptophan 65, aspartate 83, aspartate 99, and aspartate 124. Catalysis depends on lysine 164, which acts as the Proton acceptor.

It belongs to the class I-like SAM-binding methyltransferase superfamily. RNA methyltransferase RlmE family.

It localises to the cytoplasm. It catalyses the reaction uridine(2552) in 23S rRNA + S-adenosyl-L-methionine = 2'-O-methyluridine(2552) in 23S rRNA + S-adenosyl-L-homocysteine + H(+). Specifically methylates the uridine in position 2552 of 23S rRNA at the 2'-O position of the ribose in the fully assembled 50S ribosomal subunit. In Shewanella loihica (strain ATCC BAA-1088 / PV-4), this protein is Ribosomal RNA large subunit methyltransferase E.